The primary structure comprises 532 residues: Bifunctional purine biosynthesis protein PurH (532 aa).

The MGS-like domain occupies 1 to 147 (MAKIKRALIS…KNYRSVTVVT (147 aa)).

This sequence belongs to the PurH family.

It carries out the reaction (6R)-10-formyltetrahydrofolate + 5-amino-1-(5-phospho-beta-D-ribosyl)imidazole-4-carboxamide = 5-formamido-1-(5-phospho-D-ribosyl)imidazole-4-carboxamide + (6S)-5,6,7,8-tetrahydrofolate. The catalysed reaction is IMP + H2O = 5-formamido-1-(5-phospho-D-ribosyl)imidazole-4-carboxamide. It participates in purine metabolism; IMP biosynthesis via de novo pathway; 5-formamido-1-(5-phospho-D-ribosyl)imidazole-4-carboxamide from 5-amino-1-(5-phospho-D-ribosyl)imidazole-4-carboxamide (10-formyl THF route): step 1/1. The protein operates within purine metabolism; IMP biosynthesis via de novo pathway; IMP from 5-formamido-1-(5-phospho-D-ribosyl)imidazole-4-carboxamide: step 1/1. The sequence is that of Bifunctional purine biosynthesis protein PurH from Magnetococcus marinus (strain ATCC BAA-1437 / JCM 17883 / MC-1).